Consider the following 337-residue polypeptide: tRNA N6-adenosine threonylcarbamoyltransferase (337 aa).

Fe cation is bound by residues His111 and His115. Residues 134–138 (LVSGG), Asp167, Gly180, and Asn272 contribute to the substrate site. Residue Asp300 coordinates Fe cation.

Belongs to the KAE1 / TsaD family. Fe(2+) is required as a cofactor.

It is found in the cytoplasm. The enzyme catalyses L-threonylcarbamoyladenylate + adenosine(37) in tRNA = N(6)-L-threonylcarbamoyladenosine(37) in tRNA + AMP + H(+). Functionally, required for the formation of a threonylcarbamoyl group on adenosine at position 37 (t(6)A37) in tRNAs that read codons beginning with adenine. Is involved in the transfer of the threonylcarbamoyl moiety of threonylcarbamoyl-AMP (TC-AMP) to the N6 group of A37, together with TsaE and TsaB. TsaD likely plays a direct catalytic role in this reaction. This is tRNA N6-adenosine threonylcarbamoyltransferase from Escherichia coli (strain SMS-3-5 / SECEC).